The sequence spans 210 residues: Mitochondrial coenzyme A diphosphatase NUDT8 (210 aa).

The 148-residue stretch at L25–L172 folds into the Nudix hydrolase domain. K70 bears the N6-succinyllysine mark. The short motif at K70–G91 is the Nudix box element. Residues E85 and E89 each coordinate Mg(2+). K96 is subject to N6-succinyllysine.

Belongs to the Nudix hydrolase family. As to quaternary structure, monomer. It depends on Mg(2+) as a cofactor. Mn(2+) is required as a cofactor. As to expression, expressed at the highest levels in the kidneys, heart, brown adipose tissue and liver (at protein level). Expressed at lower levels in the brain, skeletal muscle, and white adipose tissue (at protein level).

The protein localises to the mitochondrion. It catalyses the reaction an acyl-CoA + H2O = an acyl-4'-phosphopantetheine + adenosine 3',5'-bisphosphate + 2 H(+). The enzyme catalyses CoA + H2O = (R)-4'-phosphopantetheine + adenosine 3',5'-bisphosphate + 2 H(+). It carries out the reaction acetyl-CoA + H2O = S-acetyl-4'-phosphopantetheine + adenosine 3',5'-bisphosphate + 2 H(+). The catalysed reaction is butanoyl-CoA + H2O = S-butanoyl-4'-phosphopantetheine + adenosine 3',5'-bisphosphate + 2 H(+). It catalyses the reaction hexanoyl-CoA + H2O = hexanoyl-4'-phosphopantetheine + adenosine 3',5'-bisphosphate + 2 H(+). The enzyme catalyses octanoyl-CoA + H2O = S-octanoyl-4'-phosphopantetheine + adenosine 3',5'-bisphosphate + 2 H(+). It carries out the reaction propanoyl-CoA + H2O = propanoyl-4'-phosphopantetheine + adenosine 3',5'-bisphosphate + 2 H(+). The catalysed reaction is malonyl-CoA + H2O = malonyl-4'-phosphopantetheine + adenosine 3',5'-bisphosphate + 2 H(+). It catalyses the reaction succinyl-CoA + H2O = succinyl-4'-phosphopantetheine + adenosine 3',5'-bisphosphate + 2 H(+). The enzyme catalyses a 5'-end CoA-ribonucleoside in mRNA + H2O = a 5'-end phospho-adenosine-phospho-ribonucleoside in mRNA + (R)-4'-phosphopantetheine + 2 H(+). In terms of biological role, acyl-CoA diphosphatase that mediates the hydrolysis of a wide range of CoA and CoA esters yielding 3',5'-ADP and the corresponding 4'-phosphopantetheine derivative as products. Hydrolyzes short- and medium-chain acyl-CoAs, exhibiting the highest activity toward free CoA, hexanoyl-CoA, and octanoyl-CoA and the lowest activity against acetyl-CoA. Exhibits decapping activity towards dpCoA-capped RNAs in vitro. The polypeptide is Mitochondrial coenzyme A diphosphatase NUDT8 (Nudt8) (Mus musculus (Mouse)).